Reading from the N-terminus, the 886-residue chain is uncharacterized protein (886 aa).

An N-terminal signal peptide occupies residues 1–20 (MKILKSLVLLVLFIVMPAKA). 6 helical membrane passes run 520–540 (VIIF…IEVI), 563–583 (TYFF…VVGA), 609–629 (LLFI…IITI), 647–667 (IIAF…IILM), 680–700 (ISTL…FLLI), and 771–791 (FLVL…SYGL).

It belongs to the TrbL/VirB6 family.

The protein resides in the cell membrane. This is an uncharacterized protein from Rickettsia typhi (strain ATCC VR-144 / Wilmington).